A 307-amino-acid chain; its full sequence is uncharacterized protein (307 aa).

One can recognise an HTH lysR-type domain in the interval 11–68 (IRLRHLHTFVAVAQQGTLGRAAETLNLSQPALSKTLNELEQLTGARLFERGRQGAQLT). The H-T-H motif DNA-binding region spans 28–47 (LGRAAETLNLSQPALSKTLN).

It belongs to the LysR transcriptional regulatory family.

This is an uncharacterized protein from Escherichia coli (strain K12).